A 588-amino-acid chain; its full sequence is Proteasome-associated ATPase (588 aa).

Residues 1-10 are compositionally biased toward basic and acidic residues; it reads MAAHDDDINR. The disordered stretch occupies residues 1–22; it reads MAAHDDDINRGTRPARGSEDPA. The stretch at 47–94 forms a coiled coil; sequence RILEERIVELQTNLAGVSAQNERLANTLREARDQIVALKEEVDRLAQP. 276 to 281 contacts ATP; sequence GCGKTL. A docks into pockets in the proteasome alpha-ring region spans residues 587-588; the sequence is YL.

It belongs to the AAA ATPase family. As to quaternary structure, homohexamer. Assembles into a hexameric ring structure that caps the 20S proteasome core. Strongly interacts with the prokaryotic ubiquitin-like protein Pup through a hydrophobic interface; the interacting region of ARC lies in its N-terminal coiled-coil domain. There is one Pup binding site per ARC hexamer ring. Upon ATP-binding, the C-terminus of ARC interacts with the alpha-rings of the proteasome core, possibly by binding to the intersubunit pockets.

It participates in protein degradation; proteasomal Pup-dependent pathway. In terms of biological role, ATPase which is responsible for recognizing, binding, unfolding and translocation of pupylated proteins into the bacterial 20S proteasome core particle. May be essential for opening the gate of the 20S proteasome via an interaction with its C-terminus, thereby allowing substrate entry and access to the site of proteolysis. Thus, the C-termini of the proteasomal ATPase may function like a 'key in a lock' to induce gate opening and therefore regulate proteolysis. This chain is Proteasome-associated ATPase, found in Streptomyces griseus subsp. griseus (strain JCM 4626 / CBS 651.72 / NBRC 13350 / KCC S-0626 / ISP 5235).